Consider the following 349-residue polypeptide: Protein Wnt-7b (349 aa).

The first 24 residues, 1 to 24 (MHRNFRKWIFYVFLCFGVLYVKLG), serve as a signal peptide directing secretion. Cystine bridges form between cysteine 73-cysteine 84, cysteine 123-cysteine 131, cysteine 133-cysteine 152, cysteine 200-cysteine 214, and cysteine 202-cysteine 209. Asparagine 83 and asparagine 127 each carry an N-linked (GlcNAc...) asparagine glycan. A lipid anchor (O-palmitoleoyl serine; by PORCN) is attached at serine 206. A disordered linker region spans residues 238–266 (VEVVRASRLRQPTFLRIKQLRSYQKPMET). Cystine bridges form between cysteine 278-cysteine 309, cysteine 294-cysteine 304, cysteine 308-cysteine 348, cysteine 324-cysteine 339, cysteine 326-cysteine 336, and cysteine 331-cysteine 332. An N-linked (GlcNAc...) asparagine glycan is attached at asparagine 295.

It belongs to the Wnt family. Forms a soluble 1:1 complex with AFM; this prevents oligomerization and is required for prolonged biological activity. The complex with AFM may represent the physiological form in body fluids. Interacts with FZD1 and FZD10. Interacts with FZD4 (in vitro). Interacts with PORCN. Interacts with glypican GPC3. Interacts (via intrinsically disordered linker region) with RECK; interaction with RECK confers ligand selectivity for Wnt7 in brain endothelial cells and allows these cells to selectively respond to Wnt7. Palmitoleoylation is required for efficient binding to frizzled receptors. Depalmitoleoylation leads to Wnt signaling pathway inhibition.

It localises to the secreted. Its subcellular location is the extracellular space. It is found in the extracellular matrix. Ligand for members of the frizzled family of seven transmembrane receptors that functions in the canonical Wnt/beta-catenin signaling pathway. Required for normal fusion of the chorion and the allantois during placenta development. Required for central nervous system (CNS) angiogenesis and blood-brain barrier regulation. The protein is Protein Wnt-7b (Wnt7b) of Mus musculus (Mouse).